The primary structure comprises 465 residues: Gamma-aminobutyric acid receptor subunit rho-2 (465 aa).

Residues 1–20 form the signal peptide; the sequence is MPYFMRLALFLFCLMALVES. The Extracellular segment spans residues 21–260; it reads RKPRRKRWTG…LYINFTLRRH (240 aa). Arg-105 provides a ligand contact to 4-aminobutanoate. Asn-120 carries N-linked (GlcNAc...) asparagine glycosylation. Residue Ser-169 coordinates 4-aminobutanoate. Residues Cys-178 and Cys-192 are joined by a disulfide bond. A 4-aminobutanoate-binding site is contributed by Glu-197. N-linked (GlcNAc...) asparagine glycosylation is present at Asn-254. The helical transmembrane segment at 261–281 threads the bilayer; sequence IFFFLLQTYFPATLMVMLSWV. Residues 282-293 lie on the Cytoplasmic side of the membrane; that stretch reads SFWIDHRAVPAR. Residues 294–314 form a helical membrane-spanning segment; the sequence is VSLGIMTVLTMSTIITGVNAS. Residues 315–325 are Extracellular-facing; the sequence is MPRVSYIRAVD. Residues 326 to 346 traverse the membrane as a helical segment; sequence IYLWVSFVFVFLSVLEYAAVN. Over 347 to 443 the chain is Cytoplasmic; it reads YLTTVQEQKE…IFQNTHAIDK (97 aa). A helical membrane pass occupies residues 444–464; it reads YSRLIFPAFYIVFNLIYWSVF. A topological domain (extracellular) is located at residue Ser-465.

The protein belongs to the ligand-gated ion channel (TC 1.A.9) family. Gamma-aminobutyric acid receptor (TC 1.A.9.5) subfamily. GABRR2 sub-subfamily. Three rho subunits (rho-1/GBRR1, rho-2/GBRR2 and rho-3/GBRR3) coassemble either to form functional homopentamers or heteropentamers. Rho-2 is unable to form a functional homopentamer. Interacts with SQSTM1. As to expression, expressed in spinal cord and in cerebellum. Expressed in retina.

It is found in the postsynaptic cell membrane. It localises to the cell membrane. It catalyses the reaction chloride(in) = chloride(out). With respect to regulation, in contrast with rho-1 and rho-3 homopentamers, rho-2 GABAARs are not inhibited by picrotoxin. Functionally, rho subunit of the pentameric ligand-gated chloride channels responsible for mediating the effects of gamma-aminobutyric acid (GABA), the major inhibitory neurotransmitter in the brain. Rho-containing GABA-gated chloride channels are a subclass of GABA(A) receptors (GABAARs) entirely composed of rho subunits, where GABA molecules bind at the rho intersubunit interfaces. When activated by GABA, rho-GABAARs selectively allow the flow of chloride anions across the cell membrane down their electrochemical gradient. Rho-2 GABAARs may contribute to the regulation of glial development in the cerebellum by controlling extrasynaptic transmission. Rho-2 GABAARs are also involved in neuronal tonic (extrasynaptic) and phasic (synaptic) transmission in the Purkinje neurons of the cerebellum. Rho-2 GABAARs expressed in retina may play a role in retinal neurotransmission. This is Gamma-aminobutyric acid receptor subunit rho-2 from Rattus norvegicus (Rat).